The primary structure comprises 333 residues: Ketol-acid reductoisomerase (NADP(+)) (333 aa).

A KARI N-terminal Rossmann domain is found at 2 to 182 (AKLYYEKDCN…GGARAGVLKT (181 aa)). NADP(+)-binding positions include 25-28 (YGSQ), S51, S53, and 83-86 (DEKQ). The active site involves H108. G134 lines the NADP(+) pocket. One can recognise a KARI C-terminal knotted domain in the interval 183–328 (TFKEETETDL…KELRDMMSWS (146 aa)). Mg(2+)-binding residues include D191, E195, E227, and E231. S252 lines the substrate pocket.

It belongs to the ketol-acid reductoisomerase family. The cofactor is Mg(2+).

It carries out the reaction (2R)-2,3-dihydroxy-3-methylbutanoate + NADP(+) = (2S)-2-acetolactate + NADPH + H(+). The enzyme catalyses (2R,3R)-2,3-dihydroxy-3-methylpentanoate + NADP(+) = (S)-2-ethyl-2-hydroxy-3-oxobutanoate + NADPH + H(+). The protein operates within amino-acid biosynthesis; L-isoleucine biosynthesis; L-isoleucine from 2-oxobutanoate: step 2/4. It functions in the pathway amino-acid biosynthesis; L-valine biosynthesis; L-valine from pyruvate: step 2/4. Its function is as follows. Involved in the biosynthesis of branched-chain amino acids (BCAA). Catalyzes an alkyl-migration followed by a ketol-acid reduction of (S)-2-acetolactate (S2AL) to yield (R)-2,3-dihydroxy-isovalerate. In the isomerase reaction, S2AL is rearranged via a Mg-dependent methyl migration to produce 3-hydroxy-3-methyl-2-ketobutyrate (HMKB). In the reductase reaction, this 2-ketoacid undergoes a metal-dependent reduction by NADPH to yield (R)-2,3-dihydroxy-isovalerate. In Alkaliphilus metalliredigens (strain QYMF), this protein is Ketol-acid reductoisomerase (NADP(+)).